Consider the following 264-residue polypeptide: Tryptophan synthase alpha chain (264 aa).

Catalysis depends on proton acceptor residues E49 and D60.

This sequence belongs to the TrpA family. As to quaternary structure, tetramer of two alpha and two beta chains.

It catalyses the reaction (1S,2R)-1-C-(indol-3-yl)glycerol 3-phosphate + L-serine = D-glyceraldehyde 3-phosphate + L-tryptophan + H2O. Its pathway is amino-acid biosynthesis; L-tryptophan biosynthesis; L-tryptophan from chorismate: step 5/5. The alpha subunit is responsible for the aldol cleavage of indoleglycerol phosphate to indole and glyceraldehyde 3-phosphate. This Lachnospira eligens (strain ATCC 27750 / DSM 3376 / VPI C15-48 / C15-B4) (Eubacterium eligens) protein is Tryptophan synthase alpha chain.